Reading from the N-terminus, the 127-residue chain is Group 3 truncated hemoglobin ctb (127 aa).

2 residues coordinate heme: Tyr64 and His72.

This sequence belongs to the truncated hemoglobin family. Group III subfamily. In terms of assembly, monomer. Heme is required as a cofactor.

It localises to the cytoplasm. Its function is as follows. Has been suggested to be involved in cytochrome c peroxidase or P450-like oxygen chemistry or cyanide detoxification. The high oxygen affinity of this protein suggests that it probably does not function as an oxygen transporter. The polypeptide is Group 3 truncated hemoglobin ctb (ctb) (Campylobacter jejuni subsp. jejuni serotype O:2 (strain ATCC 700819 / NCTC 11168)).